The sequence spans 225 residues: Protein-L-isoaspartate O-methyltransferase (225 aa).

Residue Ser75 is part of the active site.

It belongs to the methyltransferase superfamily. L-isoaspartyl/D-aspartyl protein methyltransferase family.

The protein resides in the cytoplasm. It carries out the reaction [protein]-L-isoaspartate + S-adenosyl-L-methionine = [protein]-L-isoaspartate alpha-methyl ester + S-adenosyl-L-homocysteine. Catalyzes the methyl esterification of L-isoaspartyl residues in peptides and proteins that result from spontaneous decomposition of normal L-aspartyl and L-asparaginyl residues. It plays a role in the repair and/or degradation of damaged proteins. This Xylella fastidiosa (strain 9a5c) protein is Protein-L-isoaspartate O-methyltransferase.